The chain runs to 207 residues: ATP-dependent Clp protease proteolytic subunit 2 (207 aa).

Catalysis depends on Ser-102, which acts as the Nucleophile. His-127 is a catalytic residue.

Belongs to the peptidase S14 family. As to quaternary structure, fourteen ClpP subunits assemble into 2 heptameric rings which stack back to back to give a disk-like structure with a central cavity, resembling the structure of eukaryotic proteasomes.

The protein localises to the cytoplasm. It catalyses the reaction Hydrolysis of proteins to small peptides in the presence of ATP and magnesium. alpha-casein is the usual test substrate. In the absence of ATP, only oligopeptides shorter than five residues are hydrolyzed (such as succinyl-Leu-Tyr-|-NHMec, and Leu-Tyr-Leu-|-Tyr-Trp, in which cleavage of the -Tyr-|-Leu- and -Tyr-|-Trp bonds also occurs).. Its function is as follows. Cleaves peptides in various proteins in a process that requires ATP hydrolysis. Has a chymotrypsin-like activity. Plays a major role in the degradation of misfolded proteins. This is ATP-dependent Clp protease proteolytic subunit 2 from Bifidobacterium longum (strain NCC 2705).